A 468-amino-acid polypeptide reads, in one-letter code: 6-phosphogluconate dehydrogenase, decarboxylating (468 aa).

Residues Gly10 to Gly15, Asn33 to Ser35, Val74 to Ala76, and Asn102 contribute to the NADP(+) site. Residues Asn102 and Ser128–Gly130 each bind substrate. The Proton acceptor role is filled by Lys183. His186 to Asn187 serves as a coordination point for substrate. Glu190 functions as the Proton donor in the catalytic mechanism. 5 residues coordinate substrate: Tyr191, Lys260, Arg287, Arg445, and His451.

It belongs to the 6-phosphogluconate dehydrogenase family. Homodimer.

It carries out the reaction 6-phospho-D-gluconate + NADP(+) = D-ribulose 5-phosphate + CO2 + NADPH. Its pathway is carbohydrate degradation; pentose phosphate pathway; D-ribulose 5-phosphate from D-glucose 6-phosphate (oxidative stage): step 3/3. Functionally, catalyzes the oxidative decarboxylation of 6-phosphogluconate to ribulose 5-phosphate and CO(2), with concomitant reduction of NADP to NADPH. The sequence is that of 6-phosphogluconate dehydrogenase, decarboxylating (gnd) from Klebsiella pneumoniae.